The primary structure comprises 181 residues: Ribonuclease HII (181 aa).

The RNase H type-2 domain occupies 1-181 (MICGIDEVGR…NLHRRSFKFI (181 aa)). Residues Asp-6, Glu-7, and Asp-98 each coordinate a divalent metal cation.

It belongs to the RNase HII family. Mn(2+) serves as cofactor. The cofactor is Mg(2+).

The protein resides in the cytoplasm. The catalysed reaction is Endonucleolytic cleavage to 5'-phosphomonoester.. Its function is as follows. Endonuclease that specifically degrades the RNA of RNA-DNA hybrids. The protein is Ribonuclease HII of Borrelia hermsii (strain HS1 / DAH).